The sequence spans 637 residues: Protein arginine N-methyltransferase 5 (637 aa).

At A2 the chain carries N-acetylalanine; in Protein arginine N-methyltransferase 5, N-terminally processed. Residues 13–292 form a TIM barrel region; that stretch reads RVSSGRDLNC…YLEYLSQNRP (280 aa). An SAM-dependent MTase PRMT-type domain is found at 308–615; it reads LQSPLQPLMD…SNSKKVWYEW (308 aa). An S-adenosyl-L-methionine-binding site is contributed by Y324. Residue F327 coordinates a protein. Residues 333-334, E392, and 419-420 each bind S-adenosyl-L-methionine; these read KY and DM. A protein contacts are provided by E435 and E444. Active-site proton donor/acceptor residues include E435 and E444. The segment at 465-637 is beta barrel; sequence PGEYTSFLAP…PTGRSYTIGL (173 aa). Residues 488-494 are dimerization; that stretch reads REKDRDP.

This sequence belongs to the class I-like SAM-binding methyltransferase superfamily. Protein arginine N-methyltransferase family. In terms of assembly, forms, at least, homodimers and homotetramers. Component of the methylosome complex, composed of PRMT5, WDR77 and CLNS1A. Found in a complex composed of PRMT5, WDR77 and RIOK1. RIOK1 and CLNS1A associate with PRMT5 in a mutually exclusive fashion, which allows the recruitment of distinct methylation substrates, such as nucleolin/NCL and Sm proteins, respectively. Interacts with PRDM1. Identified in a complex composed of methylosome and PRMT1 and ERH. Interacts with EGFR; methylates EGFR and stimulates EGFR-mediated ERK activation. Interacts with HOXA9. Interacts with SRGAP2. Found in a complex with COPRS, RUNX1 and CBFB. Interacts with CHTOP; the interaction symmetrically methylates CHTOP, but seems to require the presence of PRMT1. Interacts with EPB41L3; this modulates methylation of target proteins. Component of a high molecular weight E2F-pocket protein complex, CERC (cyclin E1 repressor complex). Associates with SWI/SNF remodeling complexes containing SMARCA2 and SMARCA4. Interacts with JAK2, SSTR1, SUPT5H, BRAF and with active RAF1. Interacts with LSM11, PRMT7 and SNRPD3. Interacts with COPRS; promoting its recruitment on histone H4. Interacts with CLNS1A/pICln. Identified in a complex with CLNS1A/pICln and Sm proteins. Interacts with RPS10. Interacts with WDR77. Interacts with IWS1. Interacts with CRY1. Interacts with POLR2A. Interacts with SMN1/SMN2. Interacts with LYAR; this interaction is direct. Interacts with TTC5/STRAP; this interaction is DNA damage-dependent and promotes PRMT5 interaction with p53/TP53. Interacts with p53/TP53 in response to DNA damage; the interaction is TTC5/STRAP dependent. Interacts with FAM47E; the interaction is direct, promotes PRMT5 localization to chromatin, and does not disrupt its association with WDR77 or STUB1. Interacts with TDRD6. Interacts with STUB1. Interacts with MBD2. Does not interact with MBD3. In terms of tissue distribution, ubiquitous.

It is found in the cytoplasm. The protein localises to the nucleus. The protein resides in the chromosome. Its subcellular location is the golgi apparatus. It carries out the reaction L-arginyl-[protein] + 2 S-adenosyl-L-methionine = N(omega),N(omega)'-dimethyl-L-arginyl-[protein] + 2 S-adenosyl-L-homocysteine + 2 H(+). Its activity is regulated as follows. Activity is increased by EGF, HGF, FGF1 or FGF2 treatments, and slightly decreased by NGF treatment. Its function is as follows. Arginine methyltransferase that can both catalyze the formation of omega-N monomethylarginine (MMA) and symmetrical dimethylarginine (sDMA), with a preference for the formation of MMA. Specifically mediates the symmetrical dimethylation of arginine residues in the small nuclear ribonucleoproteins Sm D1 (SNRPD1) and Sm D3 (SNRPD3); such methylation being required for the assembly and biogenesis of snRNP core particles. Methylates SUPT5H and may regulate its transcriptional elongation properties. May methylate the N-terminal region of MBD2. Mono- and dimethylates arginine residues of myelin basic protein (MBP) in vitro. May play a role in cytokine-activated transduction pathways. Negatively regulates cyclin E1 promoter activity and cellular proliferation. Methylates histone H2A and H4 'Arg-3' during germ cell development. Methylates histone H3 'Arg-8', which may repress transcription. Methylates the Piwi proteins (PIWIL1, PIWIL2 and PIWIL4), methylation of Piwi proteins being required for the interaction with Tudor domain-containing proteins and subsequent localization to the meiotic nuage. Methylates RPS10. Attenuates EGF signaling through the MAPK1/MAPK3 pathway acting at 2 levels. First, monomethylates EGFR; this enhances EGFR 'Tyr-1197' phosphorylation and PTPN6 recruitment, eventually leading to reduced SOS1 phosphorylation. Second, methylates RAF1 and probably BRAF, hence destabilizing these 2 signaling proteins and reducing their catalytic activity. Required for induction of E-selectin and VCAM-1, on the endothelial cells surface at sites of inflammation. Methylates HOXA9. Methylates and regulates SRGAP2 which is involved in cell migration and differentiation. Acts as a transcriptional corepressor in CRY1-mediated repression of the core circadian component PER1 by regulating the H4R3 dimethylation at the PER1 promoter. Methylates GM130/GOLGA2, regulating Golgi ribbon formation. Methylates H4R3 in genes involved in glioblastomagenesis in a CHTOP- and/or TET1-dependent manner. Symmetrically methylates POLR2A, a modification that allows the recruitment to POLR2A of proteins including SMN1/SMN2 and SETX. This is required for resolving RNA-DNA hybrids created by RNA polymerase II, that form R-loop in transcription terminal regions, an important step in proper transcription termination. Along with LYAR, binds the promoter of gamma-globin HBG1/HBG2 and represses its expression. Symmetrically methylates NCL. Methylates p53/TP53; methylation might possibly affect p53/TP53 target gene specificity. Involved in spliceosome maturation and mRNA splicing in prophase I spermatocytes through the catalysis of the symmetrical arginine dimethylation of SNRPB (small nuclear ribonucleoprotein-associated protein) and the interaction with tudor domain-containing protein TDRD6. The sequence is that of Protein arginine N-methyltransferase 5 (PRMT5) from Homo sapiens (Human).